Consider the following 236-residue polypeptide: Small ribosomal subunit protein uS3 (236 aa).

One can recognise a KH type-2 domain in the interval Ile39–His107. The interval Glu216–Ala236 is disordered.

The protein belongs to the universal ribosomal protein uS3 family. As to quaternary structure, part of the 30S ribosomal subunit. Forms a tight complex with proteins S10 and S14.

Binds the lower part of the 30S subunit head. Binds mRNA in the 70S ribosome, positioning it for translation. This Bartonella henselae (strain ATCC 49882 / DSM 28221 / CCUG 30454 / Houston 1) (Rochalimaea henselae) protein is Small ribosomal subunit protein uS3.